The chain runs to 243 residues: Leucinostatins biosynthesis cluster protein S (243 aa).

Part of the gene cluster that mediates the biosynthesis of the lipopeptide antibiotics leucinostatins that show extensive biological activities, including antimalarial, antiviral, antibacterial, antifungal, and antitumor activities, as well as phytotoxic. The function of lcsS within the leucinostatins biosynthesis has not been identified yet. This is Leucinostatins biosynthesis cluster protein S from Purpureocillium lilacinum (Paecilomyces lilacinus).